The primary structure comprises 772 residues: uncharacterized protein (772 aa).

2 consecutive transmembrane segments (helical) span residues 16-36 and 301-321; these read LITFFCLLSTIPVILVGLFSY and IGWITFAVCLILLTLSLLFSW. One can recognise an HTH araC/xylS-type domain in the interval 670–768; the sequence is DNIIHIIHHE…GITPGNYRQQ (99 aa). DNA-binding regions (H-T-H motif) lie at residues 687-708 and 735-758; these read DEIARRLHYNPNYLSSIFKKEM and VKDIAEKLKYKNSQNFIRSFKKLE.

The protein resides in the cell membrane. This is an uncharacterized protein from Bacillus subtilis (strain 168).